The chain runs to 487 residues: Protein nucleotidyltransferase YdiU (487 aa).

ATP-binding residues include glycine 85, glycine 87, arginine 88, lysine 108, aspartate 120, glycine 121, arginine 171, and arginine 178. Aspartate 247 acts as the Proton acceptor in catalysis. Residues asparagine 248 and aspartate 257 each contribute to the Mg(2+) site. Residue aspartate 257 coordinates ATP.

It belongs to the SELO family. Mg(2+) is required as a cofactor. It depends on Mn(2+) as a cofactor.

It catalyses the reaction L-seryl-[protein] + ATP = 3-O-(5'-adenylyl)-L-seryl-[protein] + diphosphate. The catalysed reaction is L-threonyl-[protein] + ATP = 3-O-(5'-adenylyl)-L-threonyl-[protein] + diphosphate. It carries out the reaction L-tyrosyl-[protein] + ATP = O-(5'-adenylyl)-L-tyrosyl-[protein] + diphosphate. The enzyme catalyses L-histidyl-[protein] + UTP = N(tele)-(5'-uridylyl)-L-histidyl-[protein] + diphosphate. It catalyses the reaction L-seryl-[protein] + UTP = O-(5'-uridylyl)-L-seryl-[protein] + diphosphate. The catalysed reaction is L-tyrosyl-[protein] + UTP = O-(5'-uridylyl)-L-tyrosyl-[protein] + diphosphate. Its function is as follows. Nucleotidyltransferase involved in the post-translational modification of proteins. It can catalyze the addition of adenosine monophosphate (AMP) or uridine monophosphate (UMP) to a protein, resulting in modifications known as AMPylation and UMPylation. In Agrobacterium fabrum (strain C58 / ATCC 33970) (Agrobacterium tumefaciens (strain C58)), this protein is Protein nucleotidyltransferase YdiU.